Here is a 546-residue protein sequence, read N- to C-terminus: Chaperonin GroEL (546 aa).

ATP is bound by residues 30–33, 87–91, Gly414, 477–479, and Asp493; these read TLGP, DGTTT, and NAL.

The protein belongs to the chaperonin (HSP60) family. As to quaternary structure, forms a cylinder of 14 subunits composed of two heptameric rings stacked back-to-back. Interacts with the co-chaperonin GroES.

The protein localises to the cytoplasm. It carries out the reaction ATP + H2O + a folded polypeptide = ADP + phosphate + an unfolded polypeptide.. Functionally, together with its co-chaperonin GroES, plays an essential role in assisting protein folding. The GroEL-GroES system forms a nano-cage that allows encapsulation of the non-native substrate proteins and provides a physical environment optimized to promote and accelerate protein folding. The protein is Chaperonin GroEL of Syntrophomonas wolfei subsp. wolfei (strain DSM 2245B / Goettingen).